Reading from the N-terminus, the 171-residue chain is Small ribosomal subunit protein uS5 (171 aa).

An S5 DRBM domain is found at 16–79 (LREKMISVNR…EEARRKLVKI (64 aa)).

This sequence belongs to the universal ribosomal protein uS5 family. In terms of assembly, part of the 30S ribosomal subunit. Contacts proteins S4 and S8.

With S4 and S12 plays an important role in translational accuracy. In terms of biological role, located at the back of the 30S subunit body where it stabilizes the conformation of the head with respect to the body. The chain is Small ribosomal subunit protein uS5 from Thiobacillus denitrificans (strain ATCC 25259 / T1).